The sequence spans 416 residues: Iron-regulated transcriptional activator AFT2 (416 aa).

A Zn(2+)-binding site is contributed by Asp53. The DNA site is built by Arg54, His55, Lys58, Ile74, Glu75, Arg76, Ser77, Asp78, and Lys81. Position 55 (His55) interacts with Zn(2+). Cys86 contributes to the Zn(2+) binding site. Ser88 serves as a coordination point for DNA. Cys109 lines the Zn(2+) pocket. Positions 119 and 120 each coordinate DNA. 2 residues coordinate Zn(2+): His133 and His135. Residues Gln157 and Asn159 each contribute to the DNA site. The CDC [2Fe-2S] cluster binding motif motif lies at Cys187–Cys189.

Homodimer. Dimerization decreases the DNA-binding activity.

The protein resides in the nucleus. Its activity is regulated as follows. Dimerization via the binding of Fe(2+) or a [2Fe-2S] cluster decreases the DNA-binding activity. Its function is as follows. Transcription factor required for iron homeostasis and resistance to oxidative stress. With AFT1, activates the gene expression in response to low-iron conditions, also called iron regulon. Recognizes the consensus iron-responsive element (Fe-RE) sequence 5'-CACCC-3' in the promoters of target genes. The transcription activation by AFT1 and AFT2 depends on the mitochondrial iron-sulfur protein biosynthesis pathway. In high iron condition, the presence of iron leads to dimerization, which in turn leads to a decrease in DNA affinity. This Saccharomyces cerevisiae (strain ATCC 204508 / S288c) (Baker's yeast) protein is Iron-regulated transcriptional activator AFT2.